A 302-amino-acid chain; its full sequence is Chloramphenicol resistance protein (302 aa).

The protein resides in the cell membrane. Functionally, this protein is thought to be a membrane-associated barrier of drug uptake. This Escherichia coli protein is Chloramphenicol resistance protein (cml).